We begin with the raw amino-acid sequence, 32 residues long: Protamine-2 (32 aa).

Residues 1-32 (PRRRRSSSRPVRRRRARRVSRRRRRRGGRRRR) are disordered.

Testis.

The protein localises to the nucleus. It is found in the chromosome. Functionally, protamines substitute for histones in the chromatin of sperm during the haploid phase of spermatogenesis. They compact sperm DNA into a highly condensed, stable and inactive complex. The sequence is that of Protamine-2 from Oncorhynchus mykiss (Rainbow trout).